Reading from the N-terminus, the 372-residue chain is NAD(P)H-quinone oxidoreductase subunit 1 (372 aa).

9 consecutive transmembrane segments (helical) span residues 27–47 (AIWM…GVLV), 65–85 (PEYI…KLVF), 97–117 (WLFT…YLIV), 128–148 (IGTG…GLLM), 166–186 (AAQS…IVMM), 204–224 (ILGW…IAAL), 266–286 (VLSA…PIPI), 308–328 (ALGI…AILL), and 347–367 (FLLP…LAFP).

The protein belongs to the complex I subunit 1 family. In terms of assembly, NDH-1 is composed of at least 11 different subunits.

It is found in the cellular thylakoid membrane. It catalyses the reaction a plastoquinone + NADH + (n+1) H(+)(in) = a plastoquinol + NAD(+) + n H(+)(out). The catalysed reaction is a plastoquinone + NADPH + (n+1) H(+)(in) = a plastoquinol + NADP(+) + n H(+)(out). In terms of biological role, NDH-1 shuttles electrons from an unknown electron donor, via FMN and iron-sulfur (Fe-S) centers, to quinones in the respiratory and/or the photosynthetic chain. The immediate electron acceptor for the enzyme in this species is believed to be plastoquinone. Couples the redox reaction to proton translocation, and thus conserves the redox energy in a proton gradient. The protein is NAD(P)H-quinone oxidoreductase subunit 1 of Trichormus variabilis (strain ATCC 29413 / PCC 7937) (Anabaena variabilis).